We begin with the raw amino-acid sequence, 586 residues long: MTTASSSASQLQQRLPEEKPWPQLSGSNADAQTFKCKYVTNHNSLGDGNFSVVKECMNIHTKDLYAMKLIKKQTVKNKIQLIQREFDLLRSISEKIRDMEKKNEHSLDIFEGHHHILQLFDYFETADNIVLITQLCQKGDLYEKIVENQCLDLETQVTSYCACLVSVLEFLHSQGIVHRDLKAENVLFRLRVNENEKNLQGEHHGDFKYDLLAHDLVLADFGLAAEYNTSKVNSLKEFVGTISYIAPEIVKCKGVGEMTPDQVGKLDKYGCPVDIWALGVLTYFMAFGYTPFDCTTDDETLECISKCDYYVDEQMMHDPKYEQFWNFVQCCFTIDPAVRRSAKNLKQHPFIKDYFATSNSLNTKDTPNFSFHPTIRRVSSTASMHTLRSPSKSRKTTTLAYLNMDGGSSETSTAFSSKMDLPDLYVDRTINSRERSLNRIRDTLKKTLSMTSLKPAGTFDYLHANKNGTSLSSSKSGLVKKNSTFVLDPKPPKNSLMNGCFSTTPESRSNFNTPKTLSRQGSSTSVKKYVNEVDLLLTPRTASMSSNDTTAINDYDTTNDKNPARKHAASFQVNVDDSDGDETMQI.

The segment at 1–26 (MTTASSSASQLQQRLPEEKPWPQLSG) is disordered. Residues 39–351 (VTNHNSLGDG…AKNLKQHPFI (313 aa)) enclose the Protein kinase domain. ATP-binding positions include 45-53 (LGDGNFSVV) and K68. D180 acts as the Proton acceptor in catalysis. Residues 503–524 (TTPESRSNFNTPKTLSRQGSST) form a disordered region. T504 carries the post-translational modification Phosphothreonine. A phosphoserine mark is found at S509 and S518. Position 538 is a phosphothreonine (T538). A Phosphoserine modification is found at S578.

It belongs to the protein kinase superfamily. Ser/Thr protein kinase family. Interacts with RIM11.

It is found in the cytoplasm. The protein localises to the nucleus. The catalysed reaction is L-seryl-[protein] + ATP = O-phospho-L-seryl-[protein] + ADP + H(+). The enzyme catalyses L-threonyl-[protein] + ATP = O-phospho-L-threonyl-[protein] + ADP + H(+). Its function is as follows. Serine/threonine protein kinase shown to have protein phosphorylation activity in vitro. This chain is Serine/threonine-protein kinase TDA1 (TDA1), found in Saccharomyces cerevisiae (strain ATCC 204508 / S288c) (Baker's yeast).